The sequence spans 356 residues: uncharacterized protein (356 aa).

Belongs to the NAD(P)-dependent epimerase/dehydratase family. Requires NAD(+) as cofactor. NADP(+) serves as cofactor.

Its function is as follows. Putative nucleotide sugar epimerase/dehydrogenase. This is an uncharacterized protein from Sinorhizobium fredii (strain NBRC 101917 / NGR234).